The primary structure comprises 358 residues: Peptide chain release factor 1 (358 aa).

Gln-233 bears the N5-methylglutamine mark.

Belongs to the prokaryotic/mitochondrial release factor family. Methylated by PrmC. Methylation increases the termination efficiency of RF1.

The protein localises to the cytoplasm. Peptide chain release factor 1 directs the termination of translation in response to the peptide chain termination codons UAG and UAA. The sequence is that of Peptide chain release factor 1 from Staphylococcus carnosus (strain TM300).